Consider the following 610-residue polypeptide: UvrABC system protein C (610 aa).

The region spanning 16 to 94 (SQPGVYRMYD…IKLYQPRYNV (79 aa)) is the GIY-YIG domain. In terms of domain architecture, UVR spans 204 to 239 (QQVLNQLISRMESASRDLRFEDAARIRDQIQAVRRV).

The protein belongs to the UvrC family. In terms of assembly, interacts with UvrB in an incision complex.

The protein localises to the cytoplasm. Its function is as follows. The UvrABC repair system catalyzes the recognition and processing of DNA lesions. UvrC both incises the 5' and 3' sides of the lesion. The N-terminal half is responsible for the 3' incision and the C-terminal half is responsible for the 5' incision. The protein is UvrABC system protein C of Pectobacterium atrosepticum (strain SCRI 1043 / ATCC BAA-672) (Erwinia carotovora subsp. atroseptica).